A 100-amino-acid chain; its full sequence is Nucleoid-associated protein jhp_0031 (100 aa).

It belongs to the YbaB/EbfC family. As to quaternary structure, homodimer.

Its subcellular location is the cytoplasm. The protein resides in the nucleoid. Binds to DNA and alters its conformation. May be involved in regulation of gene expression, nucleoid organization and DNA protection. The sequence is that of Nucleoid-associated protein jhp_0031 from Helicobacter pylori (strain J99 / ATCC 700824) (Campylobacter pylori J99).